The primary structure comprises 312 residues: Olfactory receptor 2J1 (312 aa).

At 1–26 (MLMKKNASFEDFFLLLGFSNWPHLEV) the chain is on the extracellular side. N-linked (GlcNAc...) asparagine glycosylation is present at Asn-6. Residues 27–50 (VLFVVILIFYLITLIGNLFIIILS) form a helical membrane-spanning segment. Residues 51-58 (YLDSHLHT) lie on the Cytoplasmic side of the membrane. The helical transmembrane segment at 59-80 (PMYFFLSNLSFLDLCYTTSSIP) threads the bilayer. The Extracellular segment spans residues 81–101 (QLLVNLWGPEKTISYAGCTVQ). A disulfide bridge links Cys-98 with Cys-190. Residues 102–121 (LYFVLALGTAECVLLVVMSY) form a helical membrane-spanning segment. Over 122–140 (DRYAAVCRPLHYTVLMHPR) the chain is Cytoplasmic. The helical transmembrane segment at 141-159 (FCRLLAAASWVSGFTTSAL) threads the bilayer. Residues 160–196 (HSSFTFWIPLCRHRLVDHFFCEVPALLRLSCVDTQAN) are Extracellular-facing. Residues 197–220 (ELTLMVMSSIFVLIPLILILTSYG) traverse the membrane as a helical segment. At 221–237 (AIARAVLSMQSTTGLQK) the chain is on the cytoplasmic side. A helical membrane pass occupies residues 238 to 260 (VLRTCGAHLMVVSLFFIPVMCMY). Residues 261-273 (LQPPSENSQDQGK) lie on the Extracellular side of the membrane. A helical membrane pass occupies residues 274–293 (FIALFYTVVTPSLNPLIYTF). The Cytoplasmic portion of the chain corresponds to 294–312 (RNKDVRGAVKRLMGWEWGM).

This sequence belongs to the G-protein coupled receptor 1 family.

The protein localises to the cell membrane. Its function is as follows. Odorant receptor. This chain is Olfactory receptor 2J1 (OR2J1), found in Homo sapiens (Human).